The following is a 239-amino-acid chain: Putative 3-methyladenine DNA glycosylase (239 aa).

This sequence belongs to the DNA glycosylase MPG family.

This Pseudomonas aeruginosa (strain UCBPP-PA14) protein is Putative 3-methyladenine DNA glycosylase.